Consider the following 233-residue polypeptide: Phycoerythrobilin synthase (233 aa).

The protein belongs to the HY2 family.

The catalysed reaction is (3Z)-phycoerythrobilin + 2 oxidized 2[4Fe-4S]-[ferredoxin] = biliverdin IXalpha + 2 reduced 2[4Fe-4S]-[ferredoxin] + 4 H(+). Plays a role in phycoerythrobilin biosynthesis, the red pigment chromophore photosynthetically active biliproteins of the host cyanobacteria. Uses a four-electron reduction to carry out the reactions catalyzed by two enzymes (EC 1.3.7.2 and EC 1.3.7.3) in host. In Prochlorococcus, this protein is Phycoerythrobilin synthase (pebS).